The following is a 366-amino-acid chain: Aminomethyltransferase (366 aa).

Belongs to the GcvT family. The glycine cleavage system is composed of four proteins: P, T, L and H.

It catalyses the reaction N(6)-[(R)-S(8)-aminomethyldihydrolipoyl]-L-lysyl-[protein] + (6S)-5,6,7,8-tetrahydrofolate = N(6)-[(R)-dihydrolipoyl]-L-lysyl-[protein] + (6R)-5,10-methylene-5,6,7,8-tetrahydrofolate + NH4(+). In terms of biological role, the glycine cleavage system catalyzes the degradation of glycine. The chain is Aminomethyltransferase from Sodalis glossinidius (strain morsitans).